A 273-amino-acid chain; its full sequence is Co-chaperone protein DjlA (273 aa).

The Periplasmic segment spans residues 1–6 (MHYWGK). The chain crosses the membrane as a helical span at residues 7 to 31 (LLGLIFGVVSGAGFWGIVIGLFIGH). Residues 32-273 (MLDRASVRGN…DLIKKEKGFK (242 aa)) are Cytoplasmic-facing. A J domain is found at 207 to 273 (DACKVLGVRE…DLIKKEKGFK (67 aa)).

Homodimer.

It is found in the cell inner membrane. In terms of biological role, regulatory DnaK co-chaperone. Direct interaction between DnaK and DjlA is needed for the induction of the wcaABCDE operon, involved in the synthesis of a colanic acid polysaccharide capsule, possibly through activation of the RcsB/RcsC phosphotransfer signaling pathway. The colanic acid capsule may help the bacterium survive conditions outside the host. This Photorhabdus laumondii subsp. laumondii (strain DSM 15139 / CIP 105565 / TT01) (Photorhabdus luminescens subsp. laumondii) protein is Co-chaperone protein DjlA.